The chain runs to 252 residues: Major prion protein (252 aa).

An N-terminal signal peptide occupies residues 1-22 (MANLGCWMLVLFVATWSDLGLC). The tract at residues 23 to 38 (KKRPKPGGWNTGGSRY) is interaction with ADGRG6. Positions 23-229 (KKRPKPGGWN…ESQAYYQRGS (207 aa)) are interaction with GRB2, ERI3 and SYN1. The tract at residues 26 to 106 (PKPGGWNTGG…QWNKPSKPKT (81 aa)) is disordered. 5 tandem repeats follow at residues 51 to 58 (PQGGGWGQ), 59 to 66 (PHGGGWGQ), 67 to 74 (PHGGGWGQ), 75 to 82 (PHGGSWGQ), and 83 to 90 (PHGGGWGQ). Residues 51–90 (PQGGGWGQPHGGGWGQPHGGGWGQPHGGSWGQPHGGGWGQ) form a 5 X 8 AA tandem repeats of P-H-G-G-G-W-G-Q region. A compositionally biased stretch (gly residues) spans 52–94 (QGGGWGQPHGGGWGQPHGGGWGQPHGGSWGQPHGGGWGQGGGT). Cu(2+)-binding residues include His-60, Gly-61, Gly-62, His-68, Gly-69, Gly-70, His-76, Gly-77, Gly-78, His-84, Gly-85, and Gly-86. Residues Cys-178 and Cys-213 are joined by a disulfide bond. 2 N-linked (GlcNAc...) asparagine glycosylation sites follow: Asn-180 and Asn-196. Residue Ser-229 is the site of GPI-anchor amidated serine attachment. Residues 230-252 (SMVLFSSPPVILLISFLIFLIVG) constitute a propeptide, removed in mature form.

Belongs to the prion family. In terms of assembly, monomer and homodimer. Has a tendency to aggregate into amyloid fibrils containing a cross-beta spine, formed by a steric zipper of superposed beta-strands. Soluble oligomers may represent an intermediate stage on the path to fibril formation. Copper binding may promote oligomerization. Interacts with GRB2, APP, ERI3/PRNPIP and SYN1. Mislocalized cytosolically exposed PrP interacts with MGRN1; this interaction alters MGRN1 subcellular location and causes lysosomal enlargement. Interacts with APP. Interacts with KIAA1191. Interacts with ADGRG6.

Its subcellular location is the cell membrane. The protein localises to the golgi apparatus. Functionally, its primary physiological function is unclear. May play a role in neuronal development and synaptic plasticity. May be required for neuronal myelin sheath maintenance. May promote myelin homeostasis through acting as an agonist for ADGRG6 receptor. May play a role in iron uptake and iron homeostasis. Soluble oligomers are toxic to cultured neuroblastoma cells and induce apoptosis (in vitro). Association with GPC1 (via its heparan sulfate chains) targets PRNP to lipid rafts. Also provides Cu(2+) or Zn(2+) for the ascorbate-mediated GPC1 deaminase degradation of its heparan sulfate side chains. The polypeptide is Major prion protein (PRNP) (Sapajus apella (Brown-capped capuchin)).